The chain runs to 131 residues: Arsenate reductase (131 aa).

Catalysis depends on nucleophile residues C10, C82, and C89. Disulfide bonds link C10–C82 and C82–C89.

The protein belongs to the low molecular weight phosphotyrosine protein phosphatase family. Thioredoxin-coupled ArsC subfamily.

The protein resides in the cytoplasm. The catalysed reaction is arsenate + [thioredoxin]-dithiol + H(+) = arsenite + [thioredoxin]-disulfide + H2O. Catalyzes the reduction of arsenate [As(V)] to arsenite [As(III)]. The protein is Arsenate reductase of Staphylococcus aureus (strain N315).